Consider the following 89-residue polypeptide: Small ribosomal subunit protein uS15 (89 aa).

This sequence belongs to the universal ribosomal protein uS15 family. Part of the 30S ribosomal subunit. Forms a bridge to the 50S subunit in the 70S ribosome, contacting the 23S rRNA.

One of the primary rRNA binding proteins, it binds directly to 16S rRNA where it helps nucleate assembly of the platform of the 30S subunit by binding and bridging several RNA helices of the 16S rRNA. In terms of biological role, forms an intersubunit bridge (bridge B4) with the 23S rRNA of the 50S subunit in the ribosome. The sequence is that of Small ribosomal subunit protein uS15 from Lactobacillus johnsonii (strain CNCM I-12250 / La1 / NCC 533).